The sequence spans 218 residues: Peptidyl-prolyl cis-trans isomerase FKBP7 (218 aa).

Residues 1 to 19 (MNLLFRLAVFLSLWCCSDA) form the signal peptide. 2 N-linked (GlcNAc...) asparagine glycosylation sites follow: N41 and N128. Residues 49 to 141 (GDLLNAHYDG…MFEIELYAVT (93 aa)) form the PPIase FKBP-type domain. 2 consecutive EF-hand domains span residues 141–176 (TKGP…DFEK) and 185–218 (YQKA…HDEL). Positions 154, 156, 158, 160, 165, 198, 200, 202, and 209 each coordinate Ca(2+). A disordered region spans residues 197-218 (NDHNGDGFISPKEYNVHQHDEL). Positions 215 to 218 (HDEL) match the Prevents secretion from ER motif.

In terms of processing, glycosylated. As to expression, expressed at highest levels in heart, lung and testis. Weakly expressed in kidney and lymph node. Little or no expression detected in brain, thymus, spleen and liver.

It is found in the endoplasmic reticulum lumen. The catalysed reaction is [protein]-peptidylproline (omega=180) = [protein]-peptidylproline (omega=0). PPIases accelerate the folding of proteins during protein synthesis. The polypeptide is Peptidyl-prolyl cis-trans isomerase FKBP7 (Fkbp7) (Mus musculus (Mouse)).